The following is a 470-amino-acid chain: Zinc finger and BTB domain-containing protein 8A.1-A (470 aa).

The region spanning 24–92 (CDCHIIVEGQ…VYSGKLPLSG (69 aa)) is the BTB domain. The interval 260 to 280 (EDEDAASHSWPESPQQESLDQ) is disordered. Over residues 269–278 (WPESPQQESL) the composition is skewed to polar residues. 2 C2H2-type zinc fingers span residues 316-338 (FKCPFCTHTVKRKADLKRHLRCH) and 344-367 (YPCEACGKRFTRLEHLRNHFQTIH). Basic and acidic residues predominate over residues 439–450 (GRKENGSERAES). The disordered stretch occupies residues 439 to 470 (GRKENGSERAESDLAIQEVVDSEDDELKEKQD).

It is found in the nucleus. Functionally, may be involved in transcriptional regulation. The sequence is that of Zinc finger and BTB domain-containing protein 8A.1-A (zbtb8a.1-a) from Xenopus laevis (African clawed frog).